Here is a 159-residue protein sequence, read N- to C-terminus: Dihydrofolate reductase (159 aa).

In terms of domain architecture, DHFR spans 1-158 (MISLIAALAV…HSYCFEILER (158 aa)). Position 5 (Ile-5) interacts with substrate. Residues Ala-7 and 13 to 19 (VIGMENA) contribute to the NADP(+) site. Asp-27 is a binding site for substrate. 45-46 (LT) provides a ligand contact to NADP(+). Substrate-binding residues include Arg-52 and Arg-57. NADP(+) is bound by residues 63-64 (SS), Lys-76, and 95-102 (GGGRVYEQ). Thr-113 is a substrate binding site.

The protein belongs to the dihydrofolate reductase family.

It carries out the reaction (6S)-5,6,7,8-tetrahydrofolate + NADP(+) = 7,8-dihydrofolate + NADPH + H(+). The protein operates within cofactor biosynthesis; tetrahydrofolate biosynthesis; 5,6,7,8-tetrahydrofolate from 7,8-dihydrofolate: step 1/1. Its function is as follows. Key enzyme in folate metabolism. Catalyzes an essential reaction for de novo glycine and purine synthesis, and for DNA precursor synthesis. The sequence is that of Dihydrofolate reductase (folA) from Klebsiella aerogenes (Enterobacter aerogenes).